We begin with the raw amino-acid sequence, 428 residues long: 3-phosphoshikimate 1-carboxyvinyltransferase (428 aa).

The 3-phosphoshikimate site is built by Lys-22, Ser-23, and Arg-27. Lys-22 is a binding site for phosphoenolpyruvate. Residues Gly-96 and Arg-124 each contribute to the phosphoenolpyruvate site. Ser-169, Ser-170, Gln-171, Ser-197, Asp-313, Asn-336, and Lys-340 together coordinate 3-phosphoshikimate. Gln-171 serves as a coordination point for phosphoenolpyruvate. Asp-313 serves as the catalytic Proton acceptor. 3 residues coordinate phosphoenolpyruvate: Arg-344, Arg-386, and Lys-411.

It belongs to the EPSP synthase family. Monomer.

It localises to the cytoplasm. The catalysed reaction is 3-phosphoshikimate + phosphoenolpyruvate = 5-O-(1-carboxyvinyl)-3-phosphoshikimate + phosphate. Its pathway is metabolic intermediate biosynthesis; chorismate biosynthesis; chorismate from D-erythrose 4-phosphate and phosphoenolpyruvate: step 6/7. In terms of biological role, catalyzes the transfer of the enolpyruvyl moiety of phosphoenolpyruvate (PEP) to the 5-hydroxyl of shikimate-3-phosphate (S3P) to produce enolpyruvyl shikimate-3-phosphate and inorganic phosphate. The polypeptide is 3-phosphoshikimate 1-carboxyvinyltransferase (Xenorhabdus nematophila (strain ATCC 19061 / DSM 3370 / CCUG 14189 / LMG 1036 / NCIMB 9965 / AN6)).